Here is a 343-residue protein sequence, read N- to C-terminus: Cyclin-Y-like protein 1 (343 aa).

The disordered stretch occupies residues 1-48 (MGNTVTCCVSPDASPKAGRDRAVTERGEPYQAQVELQETDPGPHLQHI). The span at 17–28 (AGRDRAVTERGE) shows a compositional bias: basic and acidic residues. The 123-residue stretch at 145–267 (EIFDEKLHPL…FLELLQFNIN (123 aa)) folds into the Cyclin N-terminal domain.

The protein belongs to the cyclin family. Cyclin Y subfamily.

The protein resides in the cell membrane. Functionally, key regulator of Wnt signaling implicated in various biological processes, such as embryonic neurogenesis. The polypeptide is Cyclin-Y-like protein 1 (ccnyl1) (Xenopus tropicalis (Western clawed frog)).